The chain runs to 227 residues: MTDTAMLPESWRGVLGDELQQPYFKELTEFVEEERARGPVYPPREEVFAALAATPYERVKVLVLGQDPYHGEGQGHGLCFSVRPGVKTPPSLRNIYKEMKEELGTPIPDNGYLMPWAEQGVLLLNAVLTVRSGEANSHKGKGWEKFTDAVIRAVADRPDPAVFVLWGNYAQKKLPLIDEERHVVVKGAHPSPLSAKKFFGSRPFTQINEAVAEQGHTPIDWTIPNLG.

The active-site Proton acceptor is aspartate 67.

This sequence belongs to the uracil-DNA glycosylase (UDG) superfamily. UNG family.

Its subcellular location is the cytoplasm. It catalyses the reaction Hydrolyzes single-stranded DNA or mismatched double-stranded DNA and polynucleotides, releasing free uracil.. Excises uracil residues from the DNA which can arise as a result of misincorporation of dUMP residues by DNA polymerase or due to deamination of cytosine. This is Uracil-DNA glycosylase 2 (ung2) from Streptomyces avermitilis (strain ATCC 31267 / DSM 46492 / JCM 5070 / NBRC 14893 / NCIMB 12804 / NRRL 8165 / MA-4680).